The chain runs to 382 residues: Pentatricopeptide repeat-containing protein 2, mitochondrial (382 aa).

One copy of the PPR repeat lies at 159-193 (TSFNILMDMLFTKGQYERAVEVLVEMRNQRVRFSK).

The protein belongs to the PTCD2 family.

The protein localises to the mitochondrion. Functionally, may be involved in mitochondrial RNA maturation and mitochondrial respiratory chain function. The polypeptide is Pentatricopeptide repeat-containing protein 2, mitochondrial (ptcd2) (Xenopus laevis (African clawed frog)).